A 621-amino-acid polypeptide reads, in one-letter code: uncharacterized protein (621 aa).

5 positions are modified to phosphoserine: Ser-269, Ser-271, Ser-274, Ser-290, and Ser-292. 6 LRR repeats span residues 333–354, 357–379, 380–401, 404–425, 426–447, and 451–472; these read QLLY…VFLS, SLVS…GELP, QLCS…YHIS, HLQI…ENVP, SLEK…RRLV, and NFEE…YRIT. Residues 552-581 form a disordered region; the sequence is SKNASGGDTSSNVSLLNGSASEEIPQNTES.

It is found in the cytoplasm. The protein resides in the nucleus. The protein localises to the vacuole membrane. This is an uncharacterized protein from Schizosaccharomyces pombe (strain 972 / ATCC 24843) (Fission yeast).